The following is a 358-amino-acid chain: DNA replication and repair protein RecF (358 aa).

30 to 37 is a binding site for ATP; it reads GANGSGKT.

The protein belongs to the RecF family.

It localises to the cytoplasm. Its function is as follows. The RecF protein is involved in DNA metabolism; it is required for DNA replication and normal SOS inducibility. RecF binds preferentially to single-stranded, linear DNA. It also seems to bind ATP. The polypeptide is DNA replication and repair protein RecF (Acinetobacter baylyi (strain ATCC 33305 / BD413 / ADP1)).